A 361-amino-acid chain; its full sequence is G-protein coupled receptor 52 (361 aa).

The Extracellular portion of the chain corresponds to 1 to 44; the sequence is MNDSRWTEWRILNTSSGILNVSERHSCPLGFGHYSAVDVCIFET. 3 N-linked (GlcNAc...) asparagine glycosylation sites follow: N2, N13, and N20. The chain crosses the membrane as a helical span at residues 45 to 65; sequence IVIVLLTFLIIAGNLTVIFVF. Topologically, residues 66–87 are cytoplasmic; the sequence is HCAPLLHHYTTSYFIQTMAYAD. Residues 88-108 form a helical membrane-spanning segment; sequence LFVGVSCLVPTLSLLHYSTGI. Topologically, residues 109-115 are extracellular; that stretch reads HESLTCQ. A disulfide bond links C114 and C193. A helical membrane pass occupies residues 116–136; that stretch reads VFGYIISVLKSVSMACLACIS. Residues 137-159 lie on the Cytoplasmic side of the membrane; sequence VDRYLAITKPLSYNQLVTPCRLR. The chain crosses the membrane as a helical span at residues 160–180; sequence ICIILIWIYSCLIFLPSFFGW. The Extracellular portion of the chain corresponds to 181 to 200; it reads GKPGYHGDIFEWCATSWLTS. Residues 201–221 traverse the membrane as a helical segment; the sequence is AYFTGFIVCLLYAPAALVVCF. Over 222–265 the chain is Cytoplasmic; that stretch reads TYFHIFKICRQHTKEINDRRARFPSHEAAASRDAGHSPDRRYAM. The helical transmembrane segment at 266–286 threads the bilayer; the sequence is VLFRITSVFYMLWLPYIIYFL. Topologically, residues 287 to 296 are extracellular; sequence LESSRVLDNP. Residues 297-317 form a helical membrane-spanning segment; it reads TLSFLTTWLAISNSFCNCVIY. The Cytoplasmic portion of the chain corresponds to 318–361; it reads SLSNSVFRLGLRRLSETMCTSCMCVKDKEARDPKPRKRANSCSI.

This sequence belongs to the G-protein coupled receptor 1 family.

It localises to the cell membrane. G- protein coupled receptor activated by antipsychotics reserpine leading to an increase in intracellular cAMP and its internalization. May play a role in locomotor activity through modulation of dopamine, NMDA and ADORA2A-induced locomotor activity. These behavioral changes are accompanied by modulation of the dopamine receptor signaling pathway in striatum. Modulates HTT level via cAMP-dependent but PKA independent mechanisms throught activation of RAB39B that translocates HTT to the endoplasmic reticulum, thus avoiding proteasome degradation. The polypeptide is G-protein coupled receptor 52 (Bos taurus (Bovine)).